We begin with the raw amino-acid sequence, 251 residues long: uncharacterized protein (251 aa).

The first 15 residues, Met-1 to Cys-15, serve as a signal peptide directing secretion. N-linked (GlcNAc...) asparagine glycans are attached at residues Asn-225 and Asn-242.

This is an uncharacterized protein from Encephalitozoon cuniculi (strain GB-M1) (Microsporidian parasite).